The primary structure comprises 199 residues: Interleukin-11 (199 aa).

A signal peptide spans 1 to 21 (MNCVCRLVLVVLSLWPDRVVA). The important for interaction with IL11RA and for the stimulation of cell proliferation stretch occupies residues 182-190 (HLTLDWAVR).

It belongs to the IL-6 superfamily. As to quaternary structure, interacts with either IL11RA1 or IL11RA2 to associate with IL6ST, giving rise to a multimeric signaling complex.

It is found in the secreted. Functionally, cytokine that stimulates the proliferation of hematopoietic stem cells and megakaryocyte progenitor cells and induces megakaryocyte maturation resulting in increased platelet production. Also promotes the proliferation of hepatocytes in response to liver damage. Binding to its receptor formed by IL6ST and either IL11RA1 or IL11RA2 activates a signaling cascade that promotes cell proliferation, also in the context of various cancers. Signaling leads to the activation of intracellular protein kinases and the phosphorylation of STAT3. The interaction with the membrane-bound IL11RA and IL6ST stimulates 'classic signaling', whereas the binding of IL11 and soluble IL11RA to IL6ST stimulates 'trans-signaling'. This chain is Interleukin-11, found in Mus musculus (Mouse).